Reading from the N-terminus, the 551-residue chain is Mesoderm induction early response protein 3 (551 aa).

The segment covering 1 to 16 (MAEASFGSSSPVGSLS) has biased composition (low complexity). Disordered regions lie at residues 1-62 (MAEA…EKEG) and 113-169 (LSGD…GNSP). Positions 17 to 36 (SEDHDFDPTAEMLVHDYDDE) are enriched in basic and acidic residues. A phosphoserine mark is found at Ser-52, Ser-53, and Ser-114. Residues 121-134 (QSSADDLTPSVTSH) show a composition bias toward polar residues. The span at 154-163 (KESEIEDVET) shows a compositional bias: acidic residues. Ser-156 is modified (phosphoserine). Phosphothreonine is present on Thr-163. Phosphoserine occurs at positions 165 and 168. Positions 174 to 273 (REIMIGLEYQ…EAIERYCCNG (100 aa)) constitute an ELM2 domain. Residues 278-330 (EGMTAWTEEECRSFEHALMLHGKDFHLIQKDKVRSRTVAECVAFYYMWKKSER) form the SANT domain.

The protein localises to the nucleus. Transcriptional repressor. This chain is Mesoderm induction early response protein 3 (Mier3), found in Mus musculus (Mouse).